The sequence spans 484 residues: Probable glycine dehydrogenase (decarboxylating) subunit 2 (484 aa).

The residue at position 264 (Lys-264) is an N6-(pyridoxal phosphate)lysine.

This sequence belongs to the GcvP family. C-terminal subunit subfamily. The glycine cleavage system is composed of four proteins: P, T, L and H. In this organism, the P 'protein' is a heterodimer of two subunits. Requires pyridoxal 5'-phosphate as cofactor.

It catalyses the reaction N(6)-[(R)-lipoyl]-L-lysyl-[glycine-cleavage complex H protein] + glycine + H(+) = N(6)-[(R)-S(8)-aminomethyldihydrolipoyl]-L-lysyl-[glycine-cleavage complex H protein] + CO2. The glycine cleavage system catalyzes the degradation of glycine. The P protein binds the alpha-amino group of glycine through its pyridoxal phosphate cofactor; CO(2) is released and the remaining methylamine moiety is then transferred to the lipoamide cofactor of the H protein. The polypeptide is Probable glycine dehydrogenase (decarboxylating) subunit 2 (Legionella pneumophila (strain Lens)).